Here is a 279-residue protein sequence, read N- to C-terminus: Phosphonates import ATP-binding protein PhnC (279 aa).

Positions 2–245 (FQLKNVTRQF…AVAAIYGAET (244 aa)) constitute an ABC transporter domain. Position 34–41 (34–41 (GRSGAGKS)) interacts with ATP.

Belongs to the ABC transporter superfamily. Phosphonates importer (TC 3.A.1.9.1) family. In terms of assembly, the complex is composed of two ATP-binding proteins (PhnC), two transmembrane proteins (PhnE) and a solute-binding protein (PhnD).

It localises to the cell inner membrane. The enzyme catalyses phosphonate(out) + ATP + H2O = phosphonate(in) + ADP + phosphate + H(+). Functionally, part of the ABC transporter complex PhnCDE involved in phosphonates import. Responsible for energy coupling to the transport system. In Rhizobium meliloti (strain 1021) (Ensifer meliloti), this protein is Phosphonates import ATP-binding protein PhnC.